An 852-amino-acid chain; its full sequence is DNA mismatch repair protein MutS (852 aa).

Position 602 to 609 (602 to 609 (GPNMSGKS)) interacts with ATP.

It belongs to the DNA mismatch repair MutS family.

Functionally, this protein is involved in the repair of mismatches in DNA. It is possible that it carries out the mismatch recognition step. This protein has a weak ATPase activity. The chain is DNA mismatch repair protein MutS from Streptococcus thermophilus (strain ATCC BAA-491 / LMD-9).